Here is a 527-residue protein sequence, read N- to C-terminus: ARS-binding protein 2 (527 aa).

3 disordered regions span residues 160–184 (PDVNSSSISTMRTSTSPSNWIHSAS), 219–265 (SHHM…NSHN), and 282–344 (IDPD…IKRL). A compositionally biased stretch (low complexity) spans 164-177 (SSSISTMRTSTSPS). Over residues 225–239 (RGSQQAHQTTPQNHS) the composition is skewed to polar residues. Positions 284–303 (PDWHQWPDDLRDVSSPKESD) are enriched in basic and acidic residues. Phosphoserine occurs at positions 297, 298, and 302. The segment covering 328–343 (PRKRGRPPGARNKIKR) has biased composition (basic residues).

It is found in the nucleus. Functionally, binds, preferentially, to the Maundrell ARS consensus sequence within ARS3002. In Schizosaccharomyces pombe (strain 972 / ATCC 24843) (Fission yeast), this protein is ARS-binding protein 2 (abp2).